We begin with the raw amino-acid sequence, 161 residues long: Endoribonuclease YbeY (161 aa).

Zn(2+) contacts are provided by histidine 120, histidine 124, and aspartate 130.

This sequence belongs to the endoribonuclease YbeY family. Requires Zn(2+) as cofactor.

The protein resides in the cytoplasm. Single strand-specific metallo-endoribonuclease involved in late-stage 70S ribosome quality control and in maturation of the 3' terminus of the 16S rRNA. The polypeptide is Endoribonuclease YbeY (Chlamydia trachomatis serovar L2 (strain ATCC VR-902B / DSM 19102 / 434/Bu)).